Reading from the N-terminus, the 434-residue chain is Nuclear distribution protein PAC1 (434 aa).

The LisH domain maps to 8-40 (QKDDLHKAMLDYLYANNHTAAFNALKESAGITY). A coiled-coil region spans residues 57-83 (TSVIRLQKKIMELENRNAALQEELSMS). 7 WD repeats span residues 106 to 147 (GHRA…RTLK), 149 to 187 (HTKPVNDLDFDHKGHLLVTCSSDLFIKIWDSQNEWKNTK), 191 to 230 (GHDHAVSAVRFMPGDQLIVSASRDRTIRVFDVASTHQVRT), 233 to 272 (GHSEWVRCVIPSADGTMLASGSKDQTVRLWDPLTGEPKSE), 275 to 334 (GHEN…MIRN), 337 to 378 (GHDN…RIVE), and 401 to 434 (KKVNGVDSVDAEPEKVVNVVATGSVDETIKIWLP).

Belongs to the WD repeat LIS1/nudF family. As to quaternary structure, self-associates. Interacts with NDL1 and dynein.

It localises to the cytoplasm. The protein resides in the cytoskeleton. It is found in the spindle pole. Its function is as follows. Positively regulates the activity of the minus-end directed microtubule motor protein dynein. May enhance dynein-mediated microtubule sliding by targeting dynein to the microtubule plus end. Required for nuclear migration during vegetative growth as well as development. Required for retrograde early endosome (EE) transport from the hyphal tip. Required for localization of dynein to the mitotic spindle poles. Recruits additional proteins to the dynein complex at SPBs. This chain is Nuclear distribution protein PAC1, found in Coprinopsis cinerea (strain Okayama-7 / 130 / ATCC MYA-4618 / FGSC 9003) (Inky cap fungus).